The sequence spans 350 residues: 2-oxoisovalerate dehydrogenase subunit beta (350 aa).

In terms of assembly, heterodimer of an alpha and a beta chain. Requires thiamine diphosphate as cofactor.

It carries out the reaction N(6)-[(R)-lipoyl]-L-lysyl-[protein] + 3-methyl-2-oxobutanoate + H(+) = N(6)-[(R)-S(8)-2-methylpropanoyldihydrolipoyl]-L-lysyl-[protein] + CO2. In terms of biological role, the branched-chain alpha-keto dehydrogenase complex catalyzes the overall conversion of alpha-keto acids to acyl-CoA and CO(2). It contains multiple copies of three enzymatic components: branched-chain alpha-keto acid decarboxylase (E1), lipoamide acyltransferase (E2) and lipoamide dehydrogenase (E3). This chain is 2-oxoisovalerate dehydrogenase subunit beta (bkdA2), found in Pseudomonas aeruginosa (strain ATCC 15692 / DSM 22644 / CIP 104116 / JCM 14847 / LMG 12228 / 1C / PRS 101 / PAO1).